Here is a 99-residue protein sequence, read N- to C-terminus: Putative septation protein SpoVG (99 aa).

Belongs to the SpoVG family.

Its function is as follows. Could be involved in septation. This chain is Putative septation protein SpoVG, found in Exiguobacterium sp. (strain ATCC BAA-1283 / AT1b).